Here is a 330-residue protein sequence, read N- to C-terminus: uncharacterized protein (330 aa).

A helical transmembrane segment spans residues 2–22 (IKPIYLIIIGTVICLVILYYF). Asn-72, Asn-94, Asn-234, and Asn-315 each carry an N-linked (GlcNAc...) asparagine; by host glycan.

The protein localises to the membrane. This is an uncharacterized protein from Acanthamoeba polyphaga mimivirus (APMV).